Here is a 273-residue protein sequence, read N- to C-terminus: NH(3)-dependent NAD(+) synthetase (273 aa).

Residue 47–54 (GISGGQDS) coordinates ATP. Aspartate 53 is a Mg(2+) binding site. Arginine 139 serves as a coordination point for deamido-NAD(+). Threonine 159 is an ATP binding site. A Mg(2+)-binding site is contributed by glutamate 164. The deamido-NAD(+) site is built by lysine 172 and aspartate 179. The ATP site is built by lysine 188 and threonine 210. 259–260 (HK) is a binding site for deamido-NAD(+).

This sequence belongs to the NAD synthetase family. In terms of assembly, homodimer.

It carries out the reaction deamido-NAD(+) + NH4(+) + ATP = AMP + diphosphate + NAD(+) + H(+). It participates in cofactor biosynthesis; NAD(+) biosynthesis; NAD(+) from deamido-NAD(+) (ammonia route): step 1/1. Its function is as follows. Catalyzes the ATP-dependent amidation of deamido-NAD to form NAD. Uses ammonia as a nitrogen source. The sequence is that of NH(3)-dependent NAD(+) synthetase from Staphylococcus aureus (strain bovine RF122 / ET3-1).